Here is a 498-residue protein sequence, read N- to C-terminus: Glycerol kinase (498 aa).

Threonine 11 contributes to the ADP binding site. Positions 11, 12, and 13 each coordinate ATP. Threonine 11 provides a ligand contact to sn-glycerol 3-phosphate. ADP is bound at residue arginine 15. Positions 81, 82, 133, and 242 each coordinate sn-glycerol 3-phosphate. Residues arginine 81, glutamate 82, tyrosine 133, aspartate 242, and glutamine 243 each coordinate glycerol. Residues threonine 264 and glycine 307 each contribute to the ADP site. ATP is bound by residues threonine 264, glycine 307, glutamine 311, and glycine 412. ADP-binding residues include glycine 412 and asparagine 416.

This sequence belongs to the FGGY kinase family.

The catalysed reaction is glycerol + ATP = sn-glycerol 3-phosphate + ADP + H(+). Its pathway is polyol metabolism; glycerol degradation via glycerol kinase pathway; sn-glycerol 3-phosphate from glycerol: step 1/1. With respect to regulation, inhibited by fructose 1,6-bisphosphate (FBP). In terms of biological role, key enzyme in the regulation of glycerol uptake and metabolism. Catalyzes the phosphorylation of glycerol to yield sn-glycerol 3-phosphate. The polypeptide is Glycerol kinase (Acidovorax ebreus (strain TPSY) (Diaphorobacter sp. (strain TPSY))).